We begin with the raw amino-acid sequence, 1063 residues long: Presequence protease, mitochondrial (1063 aa).

Residues 1-33 (MLRLANRVSRKDSGNLGIAQLKKRLLATSGVSQ) constitute a mitochondrion transit peptide. Position 105 (H105) interacts with Zn(2+). The active-site Proton acceptor is the E108. H109 is a binding site for Zn(2+). E181 is a catalytic residue. E206 is a Zn(2+) binding site.

This sequence belongs to the peptidase M16 family. PreP subfamily. As to quaternary structure, monomer and homodimer; homodimerization is induced by binding of the substrate. Zn(2+) is required as a cofactor.

It localises to the mitochondrion intermembrane space. It is found in the mitochondrion matrix. Degrades mitochondrial transit peptides after their cleavage in the intermembrane space or in the matrix, and presequence peptides; clearance of these peptides is required to keep the presequence processing machinery running. Preferentially cleaves the N-terminal side of paired basic amino acid residues. Also degrades other unstructured peptides. May function as an ATP-dependent peptidase as opposed to a metalloendopeptidase. The protein is Presequence protease, mitochondrial (CYM1) of Debaryomyces hansenii (strain ATCC 36239 / CBS 767 / BCRC 21394 / JCM 1990 / NBRC 0083 / IGC 2968) (Yeast).